A 152-amino-acid polypeptide reads, in one-letter code: Ribosome maturation factor RimP (152 aa).

This sequence belongs to the RimP family.

It localises to the cytoplasm. Required for maturation of 30S ribosomal subunits. This Desulfitobacterium hafniense (strain Y51) protein is Ribosome maturation factor RimP.